Consider the following 199-residue polypeptide: Probable GTP-binding protein EngB (199 aa).

Positions Q22 to I195 constitute an EngB-type G domain. GTP is bound by residues G30–S37, G57–T61, D75–G78, T142–D145, and F174–A176. Residues S37 and T59 each coordinate Mg(2+).

Belongs to the TRAFAC class TrmE-Era-EngA-EngB-Septin-like GTPase superfamily. EngB GTPase family. Mg(2+) is required as a cofactor.

In terms of biological role, necessary for normal cell division and for the maintenance of normal septation. The polypeptide is Probable GTP-binding protein EngB (Latilactobacillus sakei subsp. sakei (strain 23K) (Lactobacillus sakei subsp. sakei)).